The primary structure comprises 759 residues: Serine/threonine-protein kinase HRK1 (759 aa).

Residues 1–32 (MPNLLSRNPFHGHHNDHHHDRENSSNNPPQLI) form a disordered region. Ser-37 carries the phosphoserine modification. A disordered region spans residues 45 to 162 (KQSNDSLRSE…PPPSKSTSTV (118 aa)). Positions 59 to 97 (SMKSTTTTTNYTTTNLNNNTHSHSNATSISTNNYNNNYE) are enriched in low complexity. Over residues 113 to 122 (SPASPKQTHS) the composition is skewed to polar residues. The Protein kinase domain occupies 215-722 (GKLGKLLGSG…LDDIFNDEWF (508 aa)). ATP-binding positions include 221 to 229 (LGSGAGGSV) and Lys-244. The active-site Proton acceptor is the Asp-340. Phosphoserine is present on residues Ser-382 and Ser-472. Over residues 493 to 502 (PNTPASIQGK) the composition is skewed to polar residues. Disordered regions lie at residues 493–578 (PNTP…GRVD) and 614–682 (AANA…KIIH). Phosphothreonine is present on Thr-495. Residue Ser-498 is modified to Phosphoserine. A compositionally biased stretch (acidic residues) spans 510 to 519 (VEEETEENKE). Residues 520–547 (DDSNNDKESTPDNDKESTIDIKISKNEN) are compositionally biased toward basic and acidic residues. The span at 614–646 (AANANPDMVPQNNPQQQQQQQQQQQQQQQQQQQ) shows a compositional bias: low complexity. The span at 663 to 672 (ASDNKSSQQH) shows a compositional bias: polar residues.

Belongs to the protein kinase superfamily. Ser/Thr protein kinase family.

It is found in the cytoplasm. The enzyme catalyses L-seryl-[protein] + ATP = O-phospho-L-seryl-[protein] + ADP + H(+). The catalysed reaction is L-threonyl-[protein] + ATP = O-phospho-L-threonyl-[protein] + ADP + H(+). Functionally, involved in regulating the activity of the plasma membrane proton pump PMA1. In Saccharomyces cerevisiae (strain ATCC 204508 / S288c) (Baker's yeast), this protein is Serine/threonine-protein kinase HRK1 (HRK1).